Reading from the N-terminus, the 147-residue chain is Vasopressin-neurophysin 2-copeptin (147 aa).

Residues C1 and C6 are joined by a disulfide bond. Position 9 is a glycine amide (G9). 7 disulfide bridges follow: C22–C66, C25–C39, C33–C56, C40–C46, C73–C85, C79–C97, and C86–C91. A glycan (N-linked (GlcNAc...) asparagine) is linked at N114.

Belongs to the vasopressin/oxytocin family. Interacts with vasopressin receptors V1bR/AVPR1B (Ki=85 pM), V1aR/AVPR1A (Ki=0.6 nM) and V2R/AVPR2 (Ki=4.9 nM). Interacts with oxytocin receptor (OXTR) (Ki=110 nM).

It is found in the secreted. In terms of biological role, neurophysin 2 specifically binds vasopressin. Vasopressin has a direct antidiuretic action on the kidney, it also causes vasoconstriction of the peripheral vessels. Acts by binding to vasopressin receptors (V1bR/AVPR1B, V1aR/AVPR1A, and V2R/AVPR2). This chain is Vasopressin-neurophysin 2-copeptin (AVP), found in Ovis aries (Sheep).